Consider the following 149-residue polypeptide: UPF0178 protein NT01CX_0440 (149 aa).

This sequence belongs to the UPF0178 family.

The chain is UPF0178 protein NT01CX_0440 from Clostridium novyi (strain NT).